The following is a 576-amino-acid chain: Quinone-reactive Ni/Fe-hydrogenase large chain (576 aa).

Residues Cys-62, Cys-65, Cys-547, and Cys-550 each coordinate Ni(2+).

It belongs to the [NiFe]/[NiFeSe] hydrogenase large subunit family. In terms of assembly, heterodimer of a large and a small subunit. The cofactor is Ni(2+).

The protein localises to the cell membrane. It carries out the reaction H2 + a menaquinone = a menaquinol. Its function is as follows. This enzyme recycles the H(2) produced by nitrogenase to increase the production of ATP and to protect nitrogenase against inhibition or damage by O(2) under carbon- or phosphate-limited conditions. The chain is Quinone-reactive Ni/Fe-hydrogenase large chain (hydB) from Wolinella succinogenes (strain ATCC 29543 / DSM 1740 / CCUG 13145 / JCM 31913 / LMG 7466 / NCTC 11488 / FDC 602W) (Vibrio succinogenes).